A 118-amino-acid chain; its full sequence is Thioredoxin H3 (118 aa).

The residue at position 2 (Ala-2) is an N-acetylalanine. One can recognise a Thioredoxin domain in the interval 2–113; it reads AAEGEVIACH…IIANLEKHKT (112 aa). Active-site nucleophile residues include Cys-39 and Cys-42. Residues Cys-39 and Cys-42 are joined by a disulfide bond.

It belongs to the thioredoxin family. Plant H-type subfamily. In terms of assembly, interacts with FBA5 and FBA8. Interacts with FBA6. Interacts with MDH1.

It is found in the cytoplasm. Its function is as follows. Thiol-disulfide oxidoreductase that possesses disulfide reductase and insulin disulfide bonds reducing activities. Heat shock causes oligomerization and formation of high molecular weight (HMW) complexes with concomitant functional switching from a disulfide reductase to chaperone. The chain is Thioredoxin H3 (TRX3) from Arabidopsis thaliana (Mouse-ear cress).